Reading from the N-terminus, the 350-residue chain is Twinfilin-1 (350 aa).

Residue Ser-2 is modified to N-acetylserine. An ADF-H 1 domain is found at 2–139 (SHRTGIQASE…SLHGYKKYLL (138 aa)). Phosphoserine is present on residues Ser-143 and Ser-277. Residues 175–313 (LQGVAFPISR…TADFLYEEVH (139 aa)) form the ADF-H 2 domain. Residue Tyr-309 is modified to Phosphotyrosine. The interval 316 to 350 (QHAHKQSFAKPKGPAGKRGIRRLIRGPAETEATTD) is disordered. A Phosphothreonine modification is found at Thr-349.

It belongs to the actin-binding proteins ADF family. Twinfilin subfamily. As to quaternary structure, interacts with G-actin; ADP-actin form and capping protein (CP). May also be able to interact with TWF2 and phosphoinositides, PI(4,5)P2. When bound to PI(4,5)P2, it is down-regulated. Interacts with ACTG1. Phosphorylated on serine and threonine residues.

The protein localises to the cytoplasm. It localises to the cytoskeleton. Actin-binding protein involved in motile and morphological processes. Inhibits actin polymerization, likely by sequestering G-actin. By capping the barbed ends of filaments, it also regulates motility. Seems to play an important role in clathrin-mediated endocytosis and distribution of endocytic organelles. In Pongo abelii (Sumatran orangutan), this protein is Twinfilin-1 (TWF1).